The following is a 158-amino-acid chain: Putative 8-oxo-dGTP diphosphatase YtkD (158 aa).

The region spanning 6 to 145 (DYYQNTVQLS…SFIMKDSVLP (140 aa)) is the Nudix hydrolase domain. A Nudix box motif is present at residues 53-74 (GKVEPMECAEEAALREVKEETG). Mg(2+) contacts are provided by Glu68 and Glu72.

It belongs to the Nudix hydrolase family. It depends on Mg(2+) as a cofactor.

It carries out the reaction 8-oxo-dGTP + H2O = 8-oxo-dGMP + diphosphate + H(+). Its activity is regulated as follows. Not induced by oxidative damage (following treatment with paraquat or hydrogen peroxide). Not induced by mitomycin C. Not induced by sigma-B general stress inducers such as sodium chloride, ethanol or heat. In terms of biological role, involved in the GO system responsible for removing an oxidatively damaged form of guanine (7,8-dihydro-8-oxoguanine, 8-oxo-dGTP) from DNA and the nucleotide pool. 8-oxo-dGTP is inserted opposite dA and dC residues of template DNA with almost equal efficiency thus leading to A.T to G.C transversions. Functions, in conjunction with MutT, to protect vegetatively growing cells from DNA-damaging agents such as H(2)O(2) or t-BHP (t-butylhydroperoxide). The 2 proteins do not however protect spores. According to PubMed:15576788, phosphohydrolase that catalyzes the hydrolysis of all common nucleoside triphosphates as well as of the mutagenic analog 8-oxo-dGTP. The high catalytic efficiency on dGTP is in contrast to results from PubMed:14761999. According to PubMed:14761999, catalyzes the hydrolysis of 8-oxo-dGTP with a specific activity 413 times higher than that exhibited against dGTP. Preferentially catalyzes the hydrolysis of 8-oxo-dGTP and 8-oxo-GTP. According to PubMed:15576788, hydrolyzes nucleoside triphosphates in a stepwise fashion through the diphosphate to the monophosphate, releasing two molecules of inorganic orthophosphate. The polypeptide is Putative 8-oxo-dGTP diphosphatase YtkD (ytkD) (Bacillus subtilis (strain 168)).